The sequence spans 2477 residues: Spectrin alpha chain, non-erythrocytic 1 (2477 aa).

Residues 1-14 (MDPSGVKVLETAED) form an N-terminal domain region. 10 Spectrin repeats span residues 45 to 146 (RFQF…VKLL), 150 to 251 (KLVQ…QGKL), 256 to 358 (EVQR…ARLN), 361 to 465 (YRLQ…QYEQ), 468 to 570 (DLQL…AQLA), 574 to 676 (HLQQ…KLRE), 679 to 781 (QQQQ…QKLA), 785 to 888 (RLQQ…DLED), 891 to 969 (QAQQ…ETGK), and 1096 to 1162 (LFRE…SEGL). The region spanning 967 to 1026 (TGKELVLALYDYQEKSPREVTMKKGDILTLLNSTNKDWWKVEVNDRQGFVPAAYVKKLDP) is the SH3 domain. At tyrosine 1176 the chain carries Phosphotyrosine. Spectrin repeat units lie at residues 1234-1336 (EVQR…EKLG), 1339-1442 (HDLQ…MMLD), 1446-1549 (ELQL…KLGE), 1552-1661 (TLQQ…KLKE), 1664-1767 (KQQN…KLNE), 1769-1873 (HRLH…RLEE), 1876-1979 (EYQQ…KLDE), 1983-2086 (FLQF…KLLE), 2097-2199 (LFLT…LELQ), and 2211-2315 (LRQE…NLEQ). Positions 2257-2477 (HQEIRAMRSQ…IEFTRSLFVN (221 aa)) are C-terminal domain. 3 EF-hand domains span residues 2328 to 2363 (EALKEFSMMFKHFDKDKSGRLNHQEFKSCLRSLGYD), 2371 to 2406 (EPDPEFESILDTVDPNRDGHVSLQEYMAFMISRETE), and 2409 to 2444 (KSSEEIESAFRALSSERKPYVTKEELYQNLTREQAD). The Ca(2+) site is built by aspartate 2341, aspartate 2343, serine 2345, arginine 2347, glutamate 2352, aspartate 2384, asparagine 2386, aspartate 2388, histidine 2390, and glutamate 2395.

It belongs to the spectrin family. Like erythrocyte spectrin, the spectrin-like proteins are capable of forming dimers which can further associate to tetramers. Interacts with ACP1. Post-translationally, phosphorylation of Tyr-1176 decreases sensitivity to cleavage by calpain in vitro.

Its subcellular location is the cytoplasm. The protein resides in the cytoskeleton. It is found in the cell cortex. Functionally, morphologically, spectrin-like proteins appear to be related to spectrin, showing a flexible rod-like structure. They can bind actin but seem to differ in their calmodulin-binding activity. In nonerythroid tissues, spectrins, in association with some other proteins, may play an important role in membrane organization. This chain is Spectrin alpha chain, non-erythrocytic 1 (SPTAN1), found in Gallus gallus (Chicken).